The chain runs to 215 residues: 3-isopropylmalate dehydratase small subunit (215 aa).

It belongs to the LeuD family. LeuD type 1 subfamily. As to quaternary structure, heterodimer of LeuC and LeuD.

The enzyme catalyses (2R,3S)-3-isopropylmalate = (2S)-2-isopropylmalate. It participates in amino-acid biosynthesis; L-leucine biosynthesis; L-leucine from 3-methyl-2-oxobutanoate: step 2/4. Catalyzes the isomerization between 2-isopropylmalate and 3-isopropylmalate, via the formation of 2-isopropylmaleate. The chain is 3-isopropylmalate dehydratase small subunit from Chromohalobacter salexigens (strain ATCC BAA-138 / DSM 3043 / CIP 106854 / NCIMB 13768 / 1H11).